Here is a 482-residue protein sequence, read N- to C-terminus: Transcription termination/antitermination protein NusA (482 aa).

Residues 133–197 (NKVVIGYVQQ…NGIEVILSRT (65 aa)) enclose the S1 motif domain. The region spanning 300–446 (LHKALVVVSD…NDNDESMEKV (147 aa)) is the KH domain.

Belongs to the NusA family. As to quaternary structure, monomer. Binds directly to the core enzyme of the DNA-dependent RNA polymerase and to nascent RNA.

The protein localises to the cytoplasm. Participates in both transcription termination and antitermination. This chain is Transcription termination/antitermination protein NusA, found in Borreliella burgdorferi (strain ATCC 35210 / DSM 4680 / CIP 102532 / B31) (Borrelia burgdorferi).